The sequence spans 314 residues: DNA oxidative demethylase ALKBH2 (314 aa).

Residues 1–28 (MTNPLNSTAANRSNQPSSDGISDGQITN) show a composition bias toward polar residues. A disordered region spans residues 1–75 (MTNPLNSTAA…KRFHYHQDQR (75 aa)). The segment covering 57–75 (NGKDDSDTKKRFHYHQDQR) has biased composition (basic and acidic residues). Residues Trp-132 and 160-163 (ALVY) contribute to the substrate site. The Fe2OG dioxygenase domain occupies 194–314 (RFNSLLLNRY…RINLTFRLVL (121 aa)). A 2-oxoglutarate-binding site is contributed by 201 to 203 (NRY). Positions 213 and 215 each coordinate Fe cation. Residue Asp-216 participates in substrate binding. The segment at 242–271 (KKDEESSQGKTGDSGPAKKRLKRSSREDQQ) is disordered. His-293 is a Fe cation binding site. 2-oxoglutarate contacts are provided by residues Arg-305 and 305-311 (RINLTFR).

It belongs to the alkB family. The cofactor is Fe(2+). Expressed ubiquitously, including in seedlings, leaves and flowers.

It is found in the nucleus. It carries out the reaction a methylated nucleobase within DNA + 2-oxoglutarate + O2 = a nucleobase within DNA + formaldehyde + succinate + CO2. In terms of biological role, dioxygenase that repairs alkylated DNA containing 1-methyladenine and 1-ethenoadenine by oxidative demethylation. Accepts double-stranded and single-stranded substrates, with a preference for dsDNA over ssDNA. Confers resistance to methylating agents such as methylmethanesulphonate (MMS). This Arabidopsis thaliana (Mouse-ear cress) protein is DNA oxidative demethylase ALKBH2 (ALKBH2).